The following is a 278-amino-acid chain: UPF0750 membrane protein YxkD (278 aa).

The next 5 helical transmembrane spans lie at 8 to 28, 46 to 66, 77 to 97, 101 to 121, and 145 to 165; these read VLMLVIGAFFFALAVNLFAIP, LFQWSPGVTNFILNAFLLLIG, YTIIAVAANSLFLHLTHGWSI, ELIINTIFAGVFAGVGIGMII, and ISYALLFFDLIVVFSSYFIIG.

Belongs to the UPF0750 family.

Its subcellular location is the cell membrane. This Bacillus subtilis (strain 168) protein is UPF0750 membrane protein YxkD (yxkD).